Consider the following 1376-residue polypeptide: Ubiquitin carboxyl-terminal hydrolase 47 (1376 aa).

The residue at position 122 (Lys-122) is an N6-acetyllysine. Residues 188–564 (VGLVNQAMTC…NAYMLIYRLK (377 aa)) enclose the USP domain. Residue Cys-197 is the Nucleophile of the active site. The interval 426–452 (EKSPQTESCTDSGAENEGSCHSDQMSN) is disordered. A compositionally biased stretch (polar residues) spans 430–452 (QTESCTDSGAENEGSCHSDQMSN). The active-site Proton acceptor is His-503. Phosphoserine is present on Ser-832. 3 disordered regions span residues 835–863 (SYSKRTAYQKAGGDSGNVDDDCERVKGPA), 880–971 (LKSL…SSDT), and 985–1025 (GLDS…ESGK). Positions 882 to 900 (SLSLQQQQQDGDNGDSSKS) are enriched in low complexity. A phosphoserine mark is found at Ser-911 and Ser-934. The span at 930–939 (HIQTSDPENF) shows a compositional bias: polar residues. Basic and acidic residues predominate over residues 941 to 951 (SEERSDSDVNN). Low complexity predominate over residues 954–970 (STSSVDSDILSSSHSSD). The segment covering 998 to 1007 (KANEGKKETW) has biased composition (basic and acidic residues). Residues 1008-1021 (DTAEEDSGTDSEYD) are compositionally biased toward acidic residues. Ser-1014 is subject to Phosphoserine. A Phosphothreonine modification is found at Thr-1016. Position 1018 is a phosphoserine (Ser-1018).

Belongs to the peptidase C19 family. USP47 subfamily. As to quaternary structure, interacts with BTRC and FBXW11. Interacts with POLB.

The protein resides in the cytoplasm. It carries out the reaction Thiol-dependent hydrolysis of ester, thioester, amide, peptide and isopeptide bonds formed by the C-terminal Gly of ubiquitin (a 76-residue protein attached to proteins as an intracellular targeting signal).. Ubiquitin-specific protease that specifically deubiquitinates monoubiquitinated DNA polymerase beta (POLB), stabilizing POLB thereby playing a role in base-excision repair (BER). Acts as a regulator of cell growth and genome integrity. May also indirectly regulate CDC25A expression at a transcriptional level. The chain is Ubiquitin carboxyl-terminal hydrolase 47 (Usp47) from Mus musculus (Mouse).